A 545-amino-acid chain; its full sequence is Glucose-6-phosphate isomerase (545 aa).

The active-site Proton donor is Glu351. Active-site residues include His382 and Lys510.

It belongs to the GPI family.

It is found in the cytoplasm. The enzyme catalyses alpha-D-glucose 6-phosphate = beta-D-fructose 6-phosphate. It functions in the pathway carbohydrate biosynthesis; gluconeogenesis. It participates in carbohydrate degradation; glycolysis; D-glyceraldehyde 3-phosphate and glycerone phosphate from D-glucose: step 2/4. Functionally, catalyzes the reversible isomerization of glucose-6-phosphate to fructose-6-phosphate. In Helicobacter pylori (strain Shi470), this protein is Glucose-6-phosphate isomerase.